Here is a 198-residue protein sequence, read N- to C-terminus: Probable molybdenum cofactor guanylyltransferase (198 aa).

GTP contacts are provided by residues 11-13, K23, D71, and D102; that span reads LAG. D102 is a Mg(2+) binding site.

Belongs to the MobA family. The cofactor is Mg(2+).

The protein localises to the cytoplasm. The enzyme catalyses Mo-molybdopterin + GTP + H(+) = Mo-molybdopterin guanine dinucleotide + diphosphate. In terms of biological role, transfers a GMP moiety from GTP to Mo-molybdopterin (Mo-MPT) cofactor (Moco or molybdenum cofactor) to form Mo-molybdopterin guanine dinucleotide (Mo-MGD) cofactor. In Halalkalibacterium halodurans (strain ATCC BAA-125 / DSM 18197 / FERM 7344 / JCM 9153 / C-125) (Bacillus halodurans), this protein is Probable molybdenum cofactor guanylyltransferase.